The chain runs to 443 residues: Probable cytosolic iron-sulfur protein assembly protein 1 (443 aa).

2 disordered regions span residues M1–A27 and R95–E124. Residues T8–S21 show a composition bias toward low complexity. WD repeat units follow at residues T14 to S57 and G61 to D103. Over residues A113 to E124 the composition is skewed to acidic residues. 6 WD repeats span residues G135–T174, E180–V219, C221–R248, S255–N294, V323–N362, and A391–Q440.

The protein belongs to the WD repeat CIA1 family.

Its function is as follows. Essential component of the cytosolic iron-sulfur (Fe/S) protein assembly machinery. Required for the maturation of extramitochondrial Fe/S proteins. This chain is Probable cytosolic iron-sulfur protein assembly protein 1, found in Phaeosphaeria nodorum (strain SN15 / ATCC MYA-4574 / FGSC 10173) (Glume blotch fungus).